A 493-amino-acid polypeptide reads, in one-letter code: Guanosine-5'-triphosphate,3'-diphosphate pyrophosphatase (493 aa).

Belongs to the GppA/Ppx family. GppA subfamily.

It carries out the reaction guanosine 3'-diphosphate 5'-triphosphate + H2O = guanosine 3',5'-bis(diphosphate) + phosphate + H(+). It participates in purine metabolism; ppGpp biosynthesis; ppGpp from GTP: step 2/2. In terms of biological role, catalyzes the conversion of pppGpp to ppGpp. Guanosine pentaphosphate (pppGpp) is a cytoplasmic signaling molecule which together with ppGpp controls the 'stringent response', an adaptive process that allows bacteria to respond to amino acid starvation, resulting in the coordinated regulation of numerous cellular activities. This is Guanosine-5'-triphosphate,3'-diphosphate pyrophosphatase from Salmonella dublin (strain CT_02021853).